The primary structure comprises 425 residues: Serine--tRNA ligase (425 aa).

230–232 (TAE) is a binding site for L-serine. An ATP-binding site is contributed by 261–263 (RSE). Glutamate 284 is an L-serine binding site. 348 to 351 (EISS) contributes to the ATP binding site. Serine 383 is a binding site for L-serine.

The protein belongs to the class-II aminoacyl-tRNA synthetase family. Type-1 seryl-tRNA synthetase subfamily. Homodimer. The tRNA molecule binds across the dimer.

The protein localises to the cytoplasm. The enzyme catalyses tRNA(Ser) + L-serine + ATP = L-seryl-tRNA(Ser) + AMP + diphosphate + H(+). The catalysed reaction is tRNA(Sec) + L-serine + ATP = L-seryl-tRNA(Sec) + AMP + diphosphate + H(+). It participates in aminoacyl-tRNA biosynthesis; selenocysteinyl-tRNA(Sec) biosynthesis; L-seryl-tRNA(Sec) from L-serine and tRNA(Sec): step 1/1. Its function is as follows. Catalyzes the attachment of serine to tRNA(Ser). Is also able to aminoacylate tRNA(Sec) with serine, to form the misacylated tRNA L-seryl-tRNA(Sec), which will be further converted into selenocysteinyl-tRNA(Sec). This is Serine--tRNA ligase from Ligilactobacillus salivarius (strain UCC118) (Lactobacillus salivarius).